Consider the following 143-residue polypeptide: Large ribosomal subunit protein uL11 (143 aa).

The protein belongs to the universal ribosomal protein uL11 family. Part of the ribosomal stalk of the 50S ribosomal subunit. Interacts with L10 and the large rRNA to form the base of the stalk. L10 forms an elongated spine to which L12 dimers bind in a sequential fashion forming a multimeric L10(L12)X complex. One or more lysine residues are methylated.

Forms part of the ribosomal stalk which helps the ribosome interact with GTP-bound translation factors. The sequence is that of Large ribosomal subunit protein uL11 from Acidovorax ebreus (strain TPSY) (Diaphorobacter sp. (strain TPSY)).